Reading from the N-terminus, the 340-residue chain is Heat-inducible transcription repressor HrcA (340 aa).

This sequence belongs to the HrcA family.

Its function is as follows. Negative regulator of class I heat shock genes (grpE-dnaK-dnaJ and groELS operons). Prevents heat-shock induction of these operons. The polypeptide is Heat-inducible transcription repressor HrcA (Mycoplasmopsis synoviae (strain 53) (Mycoplasma synoviae)).